A 171-amino-acid chain; its full sequence is UPF0763 protein Hac_0849 (171 aa).

Belongs to the UPF0763 family.

The chain is UPF0763 protein Hac_0849 from Helicobacter acinonychis (strain Sheeba).